A 152-amino-acid polypeptide reads, in one-letter code: Transcriptional repressor NrdR (152 aa).

The segment at 3-34 is a zinc-finger region; sequence CPYCNASDTKVIDSRLAAEGAQVRRRRSCNSC. Residues 49–139 form the ATP-cone domain; the sequence is PRIIKSSGKI…VYRDFQDIDA (91 aa).

Belongs to the NrdR family. Zn(2+) is required as a cofactor.

Negatively regulates transcription of bacterial ribonucleotide reductase nrd genes and operons by binding to NrdR-boxes. This chain is Transcriptional repressor NrdR, found in Psychrobacter arcticus (strain DSM 17307 / VKM B-2377 / 273-4).